We begin with the raw amino-acid sequence, 257 residues long: MIVAVDVGNTSTKIALCENGTVVDKWRISTCGKRTAAEYFSCISVLASRRSADILAGVRGAAISSVVPVVNRHVEELFERFFNISPVFITNSHADLFGLKICLAQPTIGADRVADLVAAKTLWPTSDLLVIDMGTATVFNLLDRNGGLYGQVVAPGVSCLVHSMRECTALLPQTLVRESEKIVCDSTAASLEAGLYWGYRAMVEGITKQIMRESTRTLRVIATGGGVGLFRNCDYLNHIDELLTIKGIVQIYEKTQG.

Residue Asp-6–Lys-13 participates in ATP binding. A substrate-binding site is contributed by Gly-109–Arg-112. Catalysis depends on Asp-111, which acts as the Proton acceptor. Asp-132 contacts K(+). Residue Thr-135 coordinates ATP. Thr-187 contacts substrate.

This sequence belongs to the type III pantothenate kinase family. In terms of assembly, homodimer. The cofactor is NH4(+). It depends on K(+) as a cofactor.

Its subcellular location is the cytoplasm. The catalysed reaction is (R)-pantothenate + ATP = (R)-4'-phosphopantothenate + ADP + H(+). Its pathway is cofactor biosynthesis; coenzyme A biosynthesis; CoA from (R)-pantothenate: step 1/5. In terms of biological role, catalyzes the phosphorylation of pantothenate (Pan), the first step in CoA biosynthesis. This Anaplasma marginale (strain St. Maries) protein is Type III pantothenate kinase.